The primary structure comprises 299 residues: ATP phosphoribosyltransferase (299 aa).

The protein belongs to the ATP phosphoribosyltransferase family. Long subfamily. The cofactor is Mg(2+).

The protein localises to the cytoplasm. It catalyses the reaction 1-(5-phospho-beta-D-ribosyl)-ATP + diphosphate = 5-phospho-alpha-D-ribose 1-diphosphate + ATP. It functions in the pathway amino-acid biosynthesis; L-histidine biosynthesis; L-histidine from 5-phospho-alpha-D-ribose 1-diphosphate: step 1/9. Its activity is regulated as follows. Feedback inhibited by histidine. Catalyzes the condensation of ATP and 5-phosphoribose 1-diphosphate to form N'-(5'-phosphoribosyl)-ATP (PR-ATP). Has a crucial role in the pathway because the rate of histidine biosynthesis seems to be controlled primarily by regulation of HisG enzymatic activity. This Campylobacter jejuni subsp. jejuni serotype O:6 (strain 81116 / NCTC 11828) protein is ATP phosphoribosyltransferase.